A 164-amino-acid chain; its full sequence is Phosphopantetheine adenylyltransferase (164 aa).

A substrate-binding site is contributed by Ser-9. ATP is bound by residues 9–10 and His-17; that span reads SF. The substrate site is built by Lys-41, Leu-73, and Lys-87. Residues 88–90, Glu-98, and 123–129 each bind ATP; these read GLR and YSYLSSS.

The protein belongs to the bacterial CoaD family. As to quaternary structure, homohexamer. The cofactor is Mg(2+).

The protein localises to the cytoplasm. The catalysed reaction is (R)-4'-phosphopantetheine + ATP + H(+) = 3'-dephospho-CoA + diphosphate. It participates in cofactor biosynthesis; coenzyme A biosynthesis; CoA from (R)-pantothenate: step 4/5. In terms of biological role, reversibly transfers an adenylyl group from ATP to 4'-phosphopantetheine, yielding dephospho-CoA (dPCoA) and pyrophosphate. This Clostridium botulinum (strain ATCC 19397 / Type A) protein is Phosphopantetheine adenylyltransferase.